The following is a 239-amino-acid chain: Pyridoxine 5'-phosphate synthase (239 aa).

A 3-amino-2-oxopropyl phosphate-binding site is contributed by Asn-7. 9–10 provides a ligand contact to 1-deoxy-D-xylulose 5-phosphate; the sequence is DH. Residue Arg-18 participates in 3-amino-2-oxopropyl phosphate binding. His-43 acts as the Proton acceptor in catalysis. Positions 45 and 50 each coordinate 1-deoxy-D-xylulose 5-phosphate. The Proton acceptor role is filled by Glu-70. Thr-100 is a binding site for 1-deoxy-D-xylulose 5-phosphate. Residue His-191 is the Proton donor of the active site. Residues Gly-192 and 213–214 contribute to the 3-amino-2-oxopropyl phosphate site; that span reads GH.

It belongs to the PNP synthase family. Homooctamer; tetramer of dimers.

The protein localises to the cytoplasm. It catalyses the reaction 3-amino-2-oxopropyl phosphate + 1-deoxy-D-xylulose 5-phosphate = pyridoxine 5'-phosphate + phosphate + 2 H2O + H(+). Its pathway is cofactor biosynthesis; pyridoxine 5'-phosphate biosynthesis; pyridoxine 5'-phosphate from D-erythrose 4-phosphate: step 5/5. Catalyzes the complicated ring closure reaction between the two acyclic compounds 1-deoxy-D-xylulose-5-phosphate (DXP) and 3-amino-2-oxopropyl phosphate (1-amino-acetone-3-phosphate or AAP) to form pyridoxine 5'-phosphate (PNP) and inorganic phosphate. This is Pyridoxine 5'-phosphate synthase from Citrifermentans bemidjiense (strain ATCC BAA-1014 / DSM 16622 / JCM 12645 / Bem) (Geobacter bemidjiensis).